Here is a 138-residue protein sequence, read N- to C-terminus: Phospholipase A2 homolog crotoxin acid subunit CA (138 aa).

Residues 1 to 37 form the signal peptide; sequence MRALWIVAVLLVGVEGSLVEFETLMMKIAGRSGISYY. 8 cysteine pairs are disulfide-bonded: cysteine 42–cysteine 131, cysteine 44–cysteine 60, cysteine 59–cysteine 111, cysteine 65–cysteine 138, cysteine 66–cysteine 104, cysteine 73–cysteine 97, cysteine 91–cysteine 102, and cysteine 131–cysteine 138. The propeptide occupies 79–82; that stretch reads VYTY. Position 84 is a pyrrolidone carboxylic acid (glutamine 84). Residues 119 to 124 constitute a propeptide that is removed on maturation; that stretch reads YDYKYL. Glutamine 125 is subject to Pyrrolidone carboxylic acid.

Belongs to the phospholipase A2 family. Group II subfamily. D49 sub-subfamily. Heterodimer of one of the acidic (CA1, CA2, CA3 or CA4) and one of the basic (CBa1, CBa2, CBb, CBc or CBd) subunits; non-covalently linked. The acidic subunit is non-toxic, without enzymatic activity and comprises 3 peptides that are cross-linked by 5 disulfide bridges. The basic subunit is toxic, has phospholipase A2 activity and is composed of a single chain. Multiple variants of each subunit give different crotoxin complexes that can be subdivided into 2 classes: (1) those of high toxicity, low PLA2 activity (CBb, CBc and CBd linked with high affinity to any CA) and high stability (K(d)=4.5 nM) and (2) those of moderate toxicity, high PLA2 activity (CBa2 linked with low affinity to any CA) and low stability (K(d)=25 nM). Expressed by the venom gland.

Its subcellular location is the secreted. Its function is as follows. CAalpha-CAbeta-CAgamma: The acidic subunit of crotoxin (CA) is a heterotrimer of three disulfide-linked chains generated by post-translational maturation of a PLA2-like precursor. CA has no PLA2 activity and is not neurotoxic by itself, but plays several important functions in the crotoxin complex by increasing the lethal potency of the uncomplexed CB subunit. It acts by physically occluding the hydrophobic interfacial binding surface (IBS) of CB. This effect decreases the adsorption of CB to phospholipid membranes, targeting the crotoxin complex to reach the specific presynaptic receptor (R48) at the neuromuscular junction. It also prevents the formation of the reactive CB dimer. Moreover, the CA subunit inhibits the catalytic activity by partially masking the catalytic site of CB and inhibits its anticoagulant activity. Heterodimer CA-CB: Crotoxin is a potent presynaptic neurotoxin that possesses phospholipase A2 (PLA2) activity and exerts a lethal action by blocking neuromuscular transmission. It consists of a non-covalent association of a basic and weakly toxic PLA2 subunit (CBa2, CBb, CBc, or CBd), with a small acidic, non-enzymatic and non-toxic subunit (CA1, CA2, CA3 or CA4). The complex acts by binding to a specific 48-kDa protein (R48/CAPT) receptor located on presynaptic membranes, forming a transient ternary complex CA-CB-R48, followed by dissociation of the CA-CB complex and release of the CA subunit. At equilibrium, only the CB subunits remain associated with the specific crotoxin receptor. In addition to neurotoxicity, crotoxin has been found to exert myotoxicity, nephrotoxicity, and cardiovascular toxicity. Moreover, anti-inflammatory, immunomodulatory, anti-tumor and analgesic effects of crotoxin have also been reported. Functionally, found in the venom as a monomer and stabilized by one disulfide bond (Cys-131 and Cys-138). This peptide induces potent antinociceptive effects in acute and chronic pain models. This effect is mediated by the release of peripheral dynorphin A, an endogenous agonist of kappa-opioid receptors, and this release is dependent on cannabinoid receptor CB2 activation. The sequence is that of Phospholipase A2 homolog crotoxin acid subunit CA from Crotalus durissus terrificus (South American rattlesnake).